Here is a 268-residue protein sequence, read N- to C-terminus: GTP cyclohydrolase FolE2 (268 aa).

Belongs to the GTP cyclohydrolase IV family.

It catalyses the reaction GTP + H2O = 7,8-dihydroneopterin 3'-triphosphate + formate + H(+). It functions in the pathway cofactor biosynthesis; 7,8-dihydroneopterin triphosphate biosynthesis; 7,8-dihydroneopterin triphosphate from GTP: step 1/1. In terms of biological role, converts GTP to 7,8-dihydroneopterin triphosphate. The polypeptide is GTP cyclohydrolase FolE2 (Ralstonia nicotianae (strain ATCC BAA-1114 / GMI1000) (Ralstonia solanacearum)).